A 208-amino-acid polypeptide reads, in one-letter code: MARYTASACRICRRENLKMYLKGDRCYTDKCAIERRPYPPGQHGQGRVKFSGYGVQLREKQKVKRMYGLLENQFRGYYHRASAAKGKTGDNLLQQLELRLDNVVFRMGFADTRNEARQLVRHGHFQVNGRKVNIPSFAVKPGTAVEVVEKSRKVLRISEALETVDRRGIPQWISLDKKAFKGTVTTVPNREDLTMPISEQLIVELYSK.

Residues 98–161 form the S4 RNA-binding domain; the sequence is LRLDNVVFRM…RKVLRISEAL (64 aa).

The protein belongs to the universal ribosomal protein uS4 family. In terms of assembly, part of the 30S ribosomal subunit. Contacts protein S5. The interaction surface between S4 and S5 is involved in control of translational fidelity.

In terms of biological role, one of the primary rRNA binding proteins, it binds directly to 16S rRNA where it nucleates assembly of the body of the 30S subunit. With S5 and S12 plays an important role in translational accuracy. The sequence is that of Small ribosomal subunit protein uS4A from Myxococcus xanthus (strain DK1622).